The sequence spans 173 residues: 6,7-dimethyl-8-ribityllumazine synthase (173 aa).

Residues tyrosine 34, 65–67 (ALE), and 94–96 (CVI) contribute to the 5-amino-6-(D-ribitylamino)uracil site. Residue 99-100 (ET) participates in (2S)-2-hydroxy-3-oxobutyl phosphate binding. Histidine 102 serves as the catalytic Proton donor. Asparagine 127 lines the 5-amino-6-(D-ribitylamino)uracil pocket. A (2S)-2-hydroxy-3-oxobutyl phosphate-binding site is contributed by arginine 141.

Belongs to the DMRL synthase family.

It catalyses the reaction (2S)-2-hydroxy-3-oxobutyl phosphate + 5-amino-6-(D-ribitylamino)uracil = 6,7-dimethyl-8-(1-D-ribityl)lumazine + phosphate + 2 H2O + H(+). It functions in the pathway cofactor biosynthesis; riboflavin biosynthesis; riboflavin from 2-hydroxy-3-oxobutyl phosphate and 5-amino-6-(D-ribitylamino)uracil: step 1/2. In terms of biological role, catalyzes the formation of 6,7-dimethyl-8-ribityllumazine by condensation of 5-amino-6-(D-ribitylamino)uracil with 3,4-dihydroxy-2-butanone 4-phosphate. This is the penultimate step in the biosynthesis of riboflavin. In Methylorubrum extorquens (strain CM4 / NCIMB 13688) (Methylobacterium extorquens), this protein is 6,7-dimethyl-8-ribityllumazine synthase.